We begin with the raw amino-acid sequence, 293 residues long: Succinate--CoA ligase [ADP-forming] subunit alpha (293 aa).

CoA is bound by residues 21-24 (TGKQ), Lys-47, and 99-101 (ITE). Tyr-162 lines the substrate pocket. The active-site Tele-phosphohistidine intermediate is His-249.

Belongs to the succinate/malate CoA ligase alpha subunit family. Heterotetramer of two alpha and two beta subunits.

The enzyme catalyses succinate + ATP + CoA = succinyl-CoA + ADP + phosphate. The catalysed reaction is GTP + succinate + CoA = succinyl-CoA + GDP + phosphate. It participates in carbohydrate metabolism; tricarboxylic acid cycle; succinate from succinyl-CoA (ligase route): step 1/1. In terms of biological role, succinyl-CoA synthetase functions in the citric acid cycle (TCA), coupling the hydrolysis of succinyl-CoA to the synthesis of either ATP or GTP and thus represents the only step of substrate-level phosphorylation in the TCA. The alpha subunit of the enzyme binds the substrates coenzyme A and phosphate, while succinate binding and nucleotide specificity is provided by the beta subunit. This Methanothermobacter thermautotrophicus (strain ATCC 29096 / DSM 1053 / JCM 10044 / NBRC 100330 / Delta H) (Methanobacterium thermoautotrophicum) protein is Succinate--CoA ligase [ADP-forming] subunit alpha.